Consider the following 313-residue polypeptide: Porphobilinogen deaminase (313 aa).

Residue cysteine 242 is modified to S-(dipyrrolylmethanemethyl)cysteine.

This sequence belongs to the HMBS family. Monomer. Dipyrromethane is required as a cofactor.

The catalysed reaction is 4 porphobilinogen + H2O = hydroxymethylbilane + 4 NH4(+). Its pathway is porphyrin-containing compound metabolism; protoporphyrin-IX biosynthesis; coproporphyrinogen-III from 5-aminolevulinate: step 2/4. In terms of biological role, tetrapolymerization of the monopyrrole PBG into the hydroxymethylbilane pre-uroporphyrinogen in several discrete steps. The protein is Porphobilinogen deaminase of Pseudomonas aeruginosa (strain LESB58).